The chain runs to 412 residues: Transcription factor NIGT1 (412 aa).

Disordered regions lie at residues 54–241 (MDAA…RCWA), 286–310 (KYRL…PAPP), and 358–412 (AMLP…TTSA). The span at 90 to 112 (ESTHADAAKSGKKEEAETSERHS) shows a compositional bias: basic and acidic residues. Low complexity predominate over residues 183–193 (ASSTTAAASST). Over residues 198-228 (SGDKPTDDDTEKHMETDKDNDKDAKDKDKEG) the composition is skewed to basic and acidic residues. In terms of domain architecture, HTH myb-type spans 232–292 (PHRKPRRCWA…HLQKYRLHTR (61 aa)). The segment at residues 263-288 (PKQIRELMKVDGLTNDEVKSHLQKYR) is a DNA-binding region (H-T-H motif). Residues 383-392 (SGSEGRRSGD) show a composition bias toward basic and acidic residues. The segment covering 395–412 (DGSSSSPAVSSSSQTTSA) has biased composition (low complexity).

Its subcellular location is the nucleus. Transcriptional repressor that may play a role in response to nitrogen. May be involved in a time-dependent signaling for transcriptional regulation of nitrate-responsive genes. Binds specifically to the DNA sequence motif 5'-GAATC-3' or 5'-GAATATTC-3'. Represses the activity of its own promoter trough binding to these motifs. In Oryza sativa subsp. japonica (Rice), this protein is Transcription factor NIGT1.